A 277-amino-acid polypeptide reads, in one-letter code: Digeranylgeranylglyceryl phosphate synthase (277 aa).

7 helical membrane-spanning segments follow: residues 13–33 (PGNAVAAGGLTFIGAFVAGGL), 40–60 (AFAVVATVLATGAGNAINDYF), 89–109 (VALFAVAVVLTLLLPWLAIAI), 143–163 (FLYGGAAVGGDLAAVVVLFAL), 199–219 (RSLYVAAGFVVVAVLSSPLPY), 220–240 (LLGLFGWVYLVVLVPALCGLA), and 256–276 (WLKASMFAAAVAFVIGRLAVV).

This sequence belongs to the UbiA prenyltransferase family. DGGGP synthase subfamily. Mg(2+) is required as a cofactor.

Its subcellular location is the cell membrane. The enzyme catalyses sn-3-O-(geranylgeranyl)glycerol 1-phosphate + (2E,6E,10E)-geranylgeranyl diphosphate = 2,3-bis-O-(geranylgeranyl)-sn-glycerol 1-phosphate + diphosphate. It participates in membrane lipid metabolism; glycerophospholipid metabolism. In terms of biological role, prenyltransferase that catalyzes the transfer of the geranylgeranyl moiety of geranylgeranyl diphosphate (GGPP) to the C2 hydroxyl of (S)-3-O-geranylgeranylglyceryl phosphate (GGGP). This reaction is the second ether-bond-formation step in the biosynthesis of archaeal membrane lipids. The chain is Digeranylgeranylglyceryl phosphate synthase from Natronomonas pharaonis (strain ATCC 35678 / DSM 2160 / CIP 103997 / JCM 8858 / NBRC 14720 / NCIMB 2260 / Gabara) (Halobacterium pharaonis).